Here is a 392-residue protein sequence, read N- to C-terminus: Integrin-linked kinase-associated serine/threonine phosphatase 2C (392 aa).

N-acetylmethionine is present on Met1. Residues 1–91 (MDLFGDLPEP…PEEEKNGGEE (91 aa)) are disordered. Residues 31–40 (DLPPTSSTDS) are compositionally biased toward low complexity. Over residues 59-70 (SGSLATSGSQVV) the composition is skewed to polar residues. Over residues 72–91 (NEGKGAKRKAPEEEKNGGEE) the composition is skewed to basic and acidic residues. The region spanning 108 to 390 (KGYVAERKGE…DNVTVMVVRI (283 aa)) is the PPM-type phosphatase domain. Residues Asp152 and Gly153 each coordinate Mn(2+). N6-acetyllysine is present on Lys210. Positions 326 and 381 each coordinate Mn(2+).

This sequence belongs to the PP2C family. In terms of assembly, interacts with ILK. Mg(2+) is required as a cofactor. It depends on Mn(2+) as a cofactor. In terms of tissue distribution, widely expressed. Highest expression observed in kidney, liver and muscle.

Its subcellular location is the cytoplasm. It catalyses the reaction O-phospho-L-seryl-[protein] + H2O = L-seryl-[protein] + phosphate. The catalysed reaction is O-phospho-L-threonyl-[protein] + H2O = L-threonyl-[protein] + phosphate. In terms of biological role, protein phosphatase that may play a role in regulation of cell cycle progression via dephosphorylation of its substrates whose appropriate phosphorylation states might be crucial for cell proliferation. Selectively associates with integrin linked kinase (ILK), to modulate cell adhesion and growth factor signaling. Inhibits the ILK-GSK3B signaling axis and may play an important role in inhibiting oncogenic transformation. The sequence is that of Integrin-linked kinase-associated serine/threonine phosphatase 2C (Ilkap) from Rattus norvegicus (Rat).